A 745-amino-acid chain; its full sequence is uncharacterized protein (745 aa).

Residues 158–256 (NQVCDYIELH…HQTPKQYRGD (99 aa)) form the HTH araC/xylS-type domain. 2 DNA-binding regions (H-T-H motif) span residues 175–196 (SELS…AESL) and 223–246 (ITDI…KHFT).

This is an uncharacterized protein from Staphylococcus aureus (strain MRSA252).